The following is a 282-amino-acid chain: Trihydroxynaphthalene reductase (282 aa).

I41, N114, and R147 together coordinate NADP(+). Catalysis depends on proton donor residues S164 and Y178. NADP(+)-binding residues include Y178, K182, I211, and T213. K182 functions as the Lowers pKa of active site Tyr in the catalytic mechanism.

This sequence belongs to the short-chain dehydrogenases/reductases (SDR) family. In terms of assembly, homotetramer.

Its pathway is pigment biosynthesis; melanin biosynthesis. Functionally, catalyzes the NADPH-dependent reduction of 1,3,8-trihydroxynaphthalene (T3HN) into (-)-vermelone. Essential for appressorial penetration of colletotrichum lagenarium. The protein is Trihydroxynaphthalene reductase (THR1) of Colletotrichum orbiculare (strain 104-T / ATCC 96160 / CBS 514.97 / LARS 414 / MAFF 240422) (Cucumber anthracnose fungus).